Consider the following 156-residue polypeptide: Small ribosomal subunit protein uS7 (156 aa).

Belongs to the universal ribosomal protein uS7 family. Part of the 30S ribosomal subunit. Contacts proteins S9 and S11.

In terms of biological role, one of the primary rRNA binding proteins, it binds directly to 16S rRNA where it nucleates assembly of the head domain of the 30S subunit. Is located at the subunit interface close to the decoding center, probably blocks exit of the E-site tRNA. This chain is Small ribosomal subunit protein uS7, found in Treponema denticola (strain ATCC 35405 / DSM 14222 / CIP 103919 / JCM 8153 / KCTC 15104).